Reading from the N-terminus, the 406-residue chain is Phosphopentomutase (406 aa).

Mn(2+)-binding residues include Asp-10, Asp-305, His-310, Asp-346, His-347, and His-358.

It belongs to the phosphopentomutase family. It depends on Mn(2+) as a cofactor.

The protein resides in the cytoplasm. The enzyme catalyses 2-deoxy-alpha-D-ribose 1-phosphate = 2-deoxy-D-ribose 5-phosphate. It carries out the reaction alpha-D-ribose 1-phosphate = D-ribose 5-phosphate. Its pathway is carbohydrate degradation; 2-deoxy-D-ribose 1-phosphate degradation; D-glyceraldehyde 3-phosphate and acetaldehyde from 2-deoxy-alpha-D-ribose 1-phosphate: step 1/2. Isomerase that catalyzes the conversion of deoxy-ribose 1-phosphate (dRib-1-P) and ribose 1-phosphate (Rib-1-P) to deoxy-ribose 5-phosphate (dRib-5-P) and ribose 5-phosphate (Rib-5-P), respectively. In Allorhizobium ampelinum (strain ATCC BAA-846 / DSM 112012 / S4) (Agrobacterium vitis (strain S4)), this protein is Phosphopentomutase.